The primary structure comprises 473 residues: Uronate isomerase (473 aa).

The protein belongs to the metallo-dependent hydrolases superfamily. Uronate isomerase family.

It carries out the reaction D-glucuronate = D-fructuronate. The enzyme catalyses aldehydo-D-galacturonate = keto-D-tagaturonate. It functions in the pathway carbohydrate metabolism; pentose and glucuronate interconversion. This is Uronate isomerase (uxaC) from Bacillus subtilis (strain 168).